The chain runs to 201 residues: Imidazole glycerol phosphate synthase subunit HisH (201 aa).

The region spanning 1–201 (MIIVIDYDAG…ILKKFVDLCD (201 aa)) is the Glutamine amidotransferase type-1 domain. The active-site Nucleophile is C79. Catalysis depends on residues H181 and E183.

Heterodimer of HisH and HisF.

The protein localises to the cytoplasm. It catalyses the reaction 5-[(5-phospho-1-deoxy-D-ribulos-1-ylimino)methylamino]-1-(5-phospho-beta-D-ribosyl)imidazole-4-carboxamide + L-glutamine = D-erythro-1-(imidazol-4-yl)glycerol 3-phosphate + 5-amino-1-(5-phospho-beta-D-ribosyl)imidazole-4-carboxamide + L-glutamate + H(+). The enzyme catalyses L-glutamine + H2O = L-glutamate + NH4(+). It participates in amino-acid biosynthesis; L-histidine biosynthesis; L-histidine from 5-phospho-alpha-D-ribose 1-diphosphate: step 5/9. Its function is as follows. IGPS catalyzes the conversion of PRFAR and glutamine to IGP, AICAR and glutamate. The HisH subunit catalyzes the hydrolysis of glutamine to glutamate and ammonia as part of the synthesis of IGP and AICAR. The resulting ammonia molecule is channeled to the active site of HisF. The protein is Imidazole glycerol phosphate synthase subunit HisH of Streptococcus mutans serotype c (strain ATCC 700610 / UA159).